Consider the following 247-residue polypeptide: Osmotin-like protein OSML81 (247 aa).

A signal peptide spans 1-21 (MGYLRSSFIFSLLAFVTYTYA). 8 disulfides stabilise this stretch: cysteine 30/cysteine 225, cysteine 72/cysteine 82, cysteine 87/cysteine 93, cysteine 141/cysteine 213, cysteine 146/cysteine 196, cysteine 154/cysteine 164, cysteine 168/cysteine 177, and cysteine 178/cysteine 183.

It belongs to the thaumatin family.

The sequence is that of Osmotin-like protein OSML81 from Solanum commersonii (Commerson's wild potato).